The chain runs to 135 residues: MLSPKRTRFRKQHRGRMKGISYRGNRICFGKYALQALEPAWITSRQIEAGRRAMTRNVRRGGKIWVRIFPDKPVTVRPTETRMGSGKGSPEYWVAVVKPGRILYEMGGVAENIARKAISIAASKMPIRTQFIISG.

This sequence belongs to the universal ribosomal protein uL16 family. Part of the 50S ribosomal subunit.

It is found in the plastid. Its subcellular location is the chloroplast. The protein is Large ribosomal subunit protein uL16c of Eucalyptus globulus subsp. globulus (Tasmanian blue gum).